Reading from the N-terminus, the 364-residue chain is MKTNLLNYDLQGLTRHFADMGEKPFRAKQVMRWMHQSGAQNFDEMTDLAKSLRHKLNEQASIEIPKLMMSQESSDGTRKWLLDVGTGNGVETVFIPESDRGTLCISSQVGCALECTFCSTGRQGFNRNLTAAEIIGQLWWANKAMGVTPKNERVISNVVMMGMGEPMANFDNVVTALSIMLDDHGYGLSRRRVTVSTSGMVPQMDRLRDVMPVALAVSLHASNDEVRNQIVPLNKKYPLKELMAACQRYLVKAPRDFITFEYVMLDGVNDKAQHAYELIELVKDVPCKFNLIPFNPFPNSGYERSSNENIRIFRDILQQAEFVVTVRKTRGDDIDAACGQLAGQVQDKTRRQQKWQQILIGQQG.

Catalysis depends on Glu91, which acts as the Proton acceptor. A Radical SAM core domain is found at 97 to 333; the sequence is ESDRGTLCIS…VTVRKTRGDD (237 aa). A disulfide bond links Cys104 and Cys338. The [4Fe-4S] cluster site is built by Cys111, Cys115, and Cys118. Residues 164 to 165, Ser196, 218 to 220, and Asn295 contribute to the S-adenosyl-L-methionine site; these read GE and SLH. Cys338 (S-methylcysteine intermediate) is an active-site residue.

The protein belongs to the radical SAM superfamily. RlmN family. Requires [4Fe-4S] cluster as cofactor.

The protein localises to the cytoplasm. It catalyses the reaction adenosine(2503) in 23S rRNA + 2 reduced [2Fe-2S]-[ferredoxin] + 2 S-adenosyl-L-methionine = 2-methyladenosine(2503) in 23S rRNA + 5'-deoxyadenosine + L-methionine + 2 oxidized [2Fe-2S]-[ferredoxin] + S-adenosyl-L-homocysteine. The enzyme catalyses adenosine(37) in tRNA + 2 reduced [2Fe-2S]-[ferredoxin] + 2 S-adenosyl-L-methionine = 2-methyladenosine(37) in tRNA + 5'-deoxyadenosine + L-methionine + 2 oxidized [2Fe-2S]-[ferredoxin] + S-adenosyl-L-homocysteine. In terms of biological role, specifically methylates position 2 of adenine 2503 in 23S rRNA and position 2 of adenine 37 in tRNAs. m2A2503 modification seems to play a crucial role in the proofreading step occurring at the peptidyl transferase center and thus would serve to optimize ribosomal fidelity. The polypeptide is Dual-specificity RNA methyltransferase RlmN (Neisseria gonorrhoeae (strain ATCC 700825 / FA 1090)).